A 336-amino-acid chain; its full sequence is Glycerol-3-phosphate dehydrogenase [NAD(P)+] (336 aa).

NADPH contacts are provided by Ser16, Tyr17, His37, and Lys111. Positions 111, 140, and 142 each coordinate sn-glycerol 3-phosphate. Ala144 is a binding site for NADPH. The sn-glycerol 3-phosphate site is built by Lys196, Asp249, Ser259, Arg260, and Asn261. The Proton acceptor role is filled by Lys196. NADPH is bound at residue Arg260. Residues Val284 and Glu286 each contribute to the NADPH site.

It belongs to the NAD-dependent glycerol-3-phosphate dehydrogenase family.

It localises to the cytoplasm. The enzyme catalyses sn-glycerol 3-phosphate + NAD(+) = dihydroxyacetone phosphate + NADH + H(+). It carries out the reaction sn-glycerol 3-phosphate + NADP(+) = dihydroxyacetone phosphate + NADPH + H(+). It functions in the pathway membrane lipid metabolism; glycerophospholipid metabolism. In terms of biological role, catalyzes the reduction of the glycolytic intermediate dihydroxyacetone phosphate (DHAP) to sn-glycerol 3-phosphate (G3P), the key precursor for phospholipid synthesis. This is Glycerol-3-phosphate dehydrogenase [NAD(P)+] from Haemophilus ducreyi (strain 35000HP / ATCC 700724).